A 61-amino-acid polypeptide reads, in one-letter code: Large ribosomal subunit protein uL30 (61 aa).

Belongs to the universal ribosomal protein uL30 family. Part of the 50S ribosomal subunit.

This chain is Large ribosomal subunit protein uL30, found in Shewanella halifaxensis (strain HAW-EB4).